The chain runs to 686 residues: DNA gyrase subunit B (686 aa).

Positions Met1–Gly27 are enriched in polar residues. A disordered region spans residues Met1–Ala29. The region spanning Cys465–Pro579 is the Toprim domain. Residues Glu471, Asp544, and Asp546 each contribute to the Mg(2+) site.

The protein belongs to the type II topoisomerase GyrB family. Heterotetramer, composed of two GyrA and two GyrB chains. In the heterotetramer, GyrA contains the active site tyrosine that forms a transient covalent intermediate with DNA, while GyrB binds cofactors and catalyzes ATP hydrolysis. Requires Mg(2+) as cofactor. The cofactor is Mn(2+). It depends on Ca(2+) as a cofactor.

It is found in the cytoplasm. The enzyme catalyses ATP-dependent breakage, passage and rejoining of double-stranded DNA.. Its function is as follows. A type II topoisomerase that negatively supercoils closed circular double-stranded (ds) DNA in an ATP-dependent manner to modulate DNA topology and maintain chromosomes in an underwound state. Negative supercoiling favors strand separation, and DNA replication, transcription, recombination and repair, all of which involve strand separation. Also able to catalyze the interconversion of other topological isomers of dsDNA rings, including catenanes and knotted rings. Type II topoisomerases break and join 2 DNA strands simultaneously in an ATP-dependent manner. This Streptomyces coelicolor (strain ATCC BAA-471 / A3(2) / M145) protein is DNA gyrase subunit B.